Reading from the N-terminus, the 509-residue chain is Lysine--tRNA ligase (509 aa).

Residues Glu417 and Glu424 each contribute to the Mg(2+) site.

The protein belongs to the class-II aminoacyl-tRNA synthetase family. As to quaternary structure, homodimer. The cofactor is Mg(2+).

The protein resides in the cytoplasm. It carries out the reaction tRNA(Lys) + L-lysine + ATP = L-lysyl-tRNA(Lys) + AMP + diphosphate. The polypeptide is Lysine--tRNA ligase (Blochmanniella pennsylvanica (strain BPEN)).